The following is a 322-amino-acid chain: Porphobilinogen deaminase (322 aa).

S-(dipyrrolylmethanemethyl)cysteine is present on cysteine 254.

This sequence belongs to the HMBS family. As to quaternary structure, monomer. Dipyrromethane is required as a cofactor.

The catalysed reaction is 4 porphobilinogen + H2O = hydroxymethylbilane + 4 NH4(+). The protein operates within porphyrin-containing compound metabolism; protoporphyrin-IX biosynthesis; coproporphyrinogen-III from 5-aminolevulinate: step 2/4. In terms of biological role, tetrapolymerization of the monopyrrole PBG into the hydroxymethylbilane pre-uroporphyrinogen in several discrete steps. This is Porphobilinogen deaminase from Methylococcus capsulatus (strain ATCC 33009 / NCIMB 11132 / Bath).